The primary structure comprises 277 residues: Probable cyclic nucleotide phosphodiesterase MCR_0369 (277 aa).

Fe cation is bound by residues Asp17, His19, Asp53, Asn83, His165, His204, and His206. AMP is bound by residues His19, Asp53, and 83–84 (NH). Residue His206 coordinates AMP.

It belongs to the cyclic nucleotide phosphodiesterase class-III family. It depends on Fe(2+) as a cofactor.

In Moraxella catarrhalis (strain BBH18), this protein is Probable cyclic nucleotide phosphodiesterase MCR_0369.